Consider the following 744-residue polypeptide: Protein pthb1 homolog (744 aa).

The span at glutamate 722–glutamate 733 shows a compositional bias: basic and acidic residues. The interval glutamate 722–alanine 744 is disordered. Acidic residues predominate over residues glutamate 734–alanine 744.

As to quaternary structure, part of BBSome complex, that contains bbs-1, bbs-2, bbs-4, bbs-5, osm-12, bbs-8/ttc-8 and bbs-9. Interacts with bbs-1.

In terms of biological role, component of the BBSome complex. The BBSome complex is thought to function as a coat complex required for sorting of specific membrane proteins to the primary cilia. The BBSome complex is required for ciliogenesis but is dispensable for centriolar satellite function. Required for proper BBSome complex assembly and its ciliary localization. Required for cilia biogenesis and both the assembly and movement of intraflagellar transport proteins along the ciliary axoneme. In ciliated sensory neurons, required for the sensation of nitric oxide and avoidance of NO-producing organisms like P.aeruginosa. The protein is Protein pthb1 homolog of Caenorhabditis elegans.